The chain runs to 268 residues: MVLKFSVSILWIQLAWVSTQLLEQSPQFLSIQEGENLTVYCNSSSVFSSLQWYRQEPGEGPVLLVTVVTGGEVKKLKRLTFQFGDARKDSSLHITAAQPGDTGLYLCAGGGSQGNLIFGKGTKLSVKPIQNPDPAVYQLRDSKSSDKSVCLFTDFDSQTNVSQSKDSDVYITDKTVLDMRSMDFKSNSAVAWSNKSDFACANAFNNSIIPEDTFFPSPESSCDVKLVEKSFETDTNLNFQNLSVIGFRILLLKVAGFNLLMTLRLWSS.

The signal sequence occupies residues Met1–Thr19. One can recognise an Ig-like V-type domain in the interval Gln20–Cys107. The segment at Gln20–Gly109 is t cell receptor alpha variable 27. 2 N-linked (GlcNAc...) asparagine glycosylation sites follow: Asn36 and Asn42. Cysteines 41 and 107 form a disulfide. Residues Ser45–Ser49 are CDR1. The segment at Val67 to Thr69 is CDR2. The tract at residues Cys107–Phe118 is CDR3. The tract at residues Gly110 to Pro128 is t cell receptor alpha joining 42. Residues Ile129 to Ser268 are t cell receptor alpha constant. The 89-residue stretch at Lys147 to Thr235 folds into the Ig-like C1-type domain. Cys150 and Cys200 are oxidised to a cystine. Residues Asn160, Asn194, Asn205, and Asn241 are each glycosylated (N-linked (GlcNAc...) asparagine). The tract at residues Cys222 to Ser243 is connecting peptide. The helical transmembrane segment at Val244–Trp266 threads the bilayer. The Cytoplasmic portion of the chain corresponds to Ser267 to Ser268.

In terms of assembly, disulfide-linked heterodimer with TRBV19*01J2S7*01C*02 beta chain. The TR primarily interacts via its CDR3-beta domain with M/matrix protein 1-derived peptide (GILGFVFTL) displayed by HLA-A*02.01 in a 'peg-notch' recognition mode. The alpha-beta TR associates with the transmembrane signaling CD3 coreceptor proteins to form the TR-CD3 (TCR). The assembly of alpha-beta TR heterodimers with CD3 occurs in the endoplasmic reticulum where a single alpha-beta TR heterodimer associates with one CD3D-CD3E heterodimer, one CD3G-CD3E heterodimer and one CD247 homodimer forming a stable octameric structure. CD3D-CD3E and CD3G-CD3E heterodimers preferentially associate with TR alpha and TR beta chains (via TM domain), respectively. The association of the CD247 homodimer is the last step of TCR assembly in the endoplasmic reticulum and is required for transport to the cell surface. As to expression, expressed in M/matrix protein 1-specific effector and memory CD8-positive T cells readily detectable in the peripheral blood, secondary lymphoid organs and lung (primary site of infection) of IAV infected individuals.

Its subcellular location is the cell membrane. In terms of biological role, the alpha chain of TRAV27*01J42*01C*01/TRBV19*01J2S7*01C*02 alpha-beta T cell receptor (TR) clonotype that is specific for HLA-A*02:01-restricted M/matrix protein 1 immunodominant epitope GILGFVFTL of influenza A virus (IAV). Classified as a public TR clonotype, it is preferentially selected in effector memory CD8-positive T cells among multiple HLA-A*02:01 carriers and confers long-lived immunity against IAV infection. Can cross-recognize sporadically emerging IAV variants by molecular mimicry, inducing immunity toward different influenza strains. Antigen recognition initiates TR-CD3 clustering on the cell surface and intracellular activation of LCK that phosphorylates the ITAM motifs of CD3G, CD3D, CD3E and CD247 enabling the recruitment of ZAP70. In turn, ZAP70 phosphorylates LAT, which recruits numerous signaling molecules to form the LAT signalosome. The LAT signalosome propagates signal branching to three major signaling pathways, the calcium, the mitogen-activated protein kinase (MAPK) kinase and the nuclear factor NF-kappa-B (NF-kB) pathways, leading to the mobilization of transcription factors that are critical for gene expression and essential for T cell differentiation into effector/memory T cells. The sequence is that of M1-specific T cell receptor alpha chain from Homo sapiens (Human).